The primary structure comprises 178 residues: ATP synthase subunit delta (178 aa).

It belongs to the ATPase delta chain family. In terms of assembly, F-type ATPases have 2 components, F(1) - the catalytic core - and F(0) - the membrane proton channel. F(1) has five subunits: alpha(3), beta(3), gamma(1), delta(1), epsilon(1). F(0) has three main subunits: a(1), b(2) and c(10-14). The alpha and beta chains form an alternating ring which encloses part of the gamma chain. F(1) is attached to F(0) by a central stalk formed by the gamma and epsilon chains, while a peripheral stalk is formed by the delta and b chains.

The protein resides in the cell inner membrane. Its function is as follows. F(1)F(0) ATP synthase produces ATP from ADP in the presence of a proton or sodium gradient. F-type ATPases consist of two structural domains, F(1) containing the extramembraneous catalytic core and F(0) containing the membrane proton channel, linked together by a central stalk and a peripheral stalk. During catalysis, ATP synthesis in the catalytic domain of F(1) is coupled via a rotary mechanism of the central stalk subunits to proton translocation. In terms of biological role, this protein is part of the stalk that links CF(0) to CF(1). It either transmits conformational changes from CF(0) to CF(1) or is implicated in proton conduction. This is ATP synthase subunit delta from Pseudomonas syringae pv. syringae (strain B728a).